The sequence spans 1427 residues: DNA-directed RNA polymerase subunit beta' (1427 aa).

Positions 70, 72, 85, and 88 each coordinate Zn(2+). Asp-461, Asp-463, and Asp-465 together coordinate Mg(2+). Zn(2+) is bound by residues Cys-838, Cys-912, Cys-919, and Cys-922.

It belongs to the RNA polymerase beta' chain family. As to quaternary structure, the RNAP catalytic core consists of 2 alpha, 1 beta, 1 beta' and 1 omega subunit. When a sigma factor is associated with the core the holoenzyme is formed, which can initiate transcription. Mg(2+) is required as a cofactor. It depends on Zn(2+) as a cofactor.

It carries out the reaction RNA(n) + a ribonucleoside 5'-triphosphate = RNA(n+1) + diphosphate. Its function is as follows. DNA-dependent RNA polymerase catalyzes the transcription of DNA into RNA using the four ribonucleoside triphosphates as substrates. This is DNA-directed RNA polymerase subunit beta' from Sorangium cellulosum (strain So ce56) (Polyangium cellulosum (strain So ce56)).